The chain runs to 177 residues: R-phycoerythrin beta chain (177 aa).

Phycourobilin contacts are provided by cysteine 50 and cysteine 61. Residue asparagine 72 is modified to N4-methylasparagine. (2R,3E)-phycoerythrobilin is bound by residues cysteine 82 and cysteine 158.

The protein belongs to the phycobiliprotein family. In terms of assembly, heterodimer of an alpha and a beta chain. Post-translationally, contains two covalently linked phycoerythrobilin chromophores and one covalently linked phycourobilin chromophore.

It localises to the plastid. Its subcellular location is the chloroplast thylakoid membrane. In terms of biological role, light-harvesting photosynthetic bile pigment-protein from the phycobiliprotein complex. This is R-phycoerythrin beta chain (cpeB) from Pyropia haitanensis (Red seaweed).